The sequence spans 275 residues: Activator of basal transcription 1 (275 aa).

Met1 carries the post-translational modification N-acetylmethionine. Composition is skewed to acidic residues over residues 1 to 10 (MEVEGLELDT) and 25 to 34 (AEEEQEESED). A disordered region spans residues 1 to 39 (MEVEGLELDTAELGPLEGSHQKLEAEEEQEESEDAAGGS). The RRM domain maps to 46–145 (GIVYLGHIPP…RRRSPFRYDL (100 aa)). Positions 164 to 194 (AFERQVRRQRLRAEVAQAKRETDFYLRSVER) form a coiled coil. Residues 200 to 275 (AADGDSTRPN…RGNSSPARNS (76 aa)) form a disordered region. The segment covering 262–275 (PSESRGNSSPARNS) has biased composition (polar residues).

It belongs to the ESF2/ABP1 family. Interacts with ESF1/ABTAP. Interacts with IGHMBP2.

The protein localises to the nucleus. The protein resides in the nucleolus. Functionally, could be a novel TATA-binding protein (TBP) which can function as a basal transcription activator. Can act as a regulator of basal transcription for class II genes. The protein is Activator of basal transcription 1 (ABT1) of Bos taurus (Bovine).